The primary structure comprises 367 residues: MQRNSLVNIKLNANSPSKKTTTRPNTSRINKPWRISHSPQQRNPNSKIPSPVREKLNRLPVNNKKFLDMESSKIPSPIRKATSSKMIHENKKLPKFKSLSLDDFELGKKLGKGKFGKVYCVRHRSTGYICALKVMEKEEIIKYNLQKQFRREVEIQTSLNHPNLTKSYGYFHDEKRVYLLMEYLVNGEMYKLLRLHGPFNDILASDYIYQIANALDYMHKKNIIHRDIKPENILIGFNNVIKLTDFGWSIINPPENRRKTVCGTIDYLSPEMVESREYDHTIDAWALGVLAFELLTGAPPFEEEMKDTTYKRIAALDIKMPSNISQDAQDLILKLLKYDPKDRMRLGDVKMHPWILRNKPFWENKRL.

Composition is skewed to polar residues over residues 1 to 29 (MQRN…TSRI) and 37 to 48 (HSPQQRNPNSKI). A disordered region spans residues 1-52 (MQRNSLVNIKLNANSPSKKTTTRPNTSRINKPWRISHSPQQRNPNSKIPSPV). Serine 5 carries the post-translational modification Phosphoserine; by autocatalysis. Serine 76 carries the post-translational modification Phosphoserine. The 252-residue stretch at 104-355 (FELGKKLGKG…LGDVKMHPWI (252 aa)) folds into the Protein kinase domain. Residues 110–118 (LGKGKFGKV) and lysine 133 contribute to the ATP site. Catalysis depends on aspartate 227, which acts as the Proton acceptor. Threonine 260 is subject to Phosphothreonine; by autocatalysis.

Belongs to the protein kinase superfamily. Ser/Thr protein kinase family. Aurora subfamily. As to quaternary structure, component of the CPC complex at least composed of IPL1, BIR1 and SLI15.

Its subcellular location is the nucleus. It is found in the cytoplasm. It localises to the cytoskeleton. The protein localises to the spindle. The protein resides in the chromosome. Its subcellular location is the centromere. It is found in the kinetochore. It carries out the reaction L-seryl-[protein] + ATP = O-phospho-L-seryl-[protein] + ADP + H(+). It catalyses the reaction L-threonyl-[protein] + ATP = O-phospho-L-threonyl-[protein] + ADP + H(+). Its function is as follows. Component of the chromosomal passenger complex (CPC), a complex that acts as a key regulator of chromosome segregation and cytokinesis. Has a role in error-correction of aberrent kinetochore-microtubule attachments to ensure that sister kinetochores become bioriented and connect to opposite poles by promoting spindle assembly checkpoint signaling. Acts in opposition to the phosphatase PP1. Not required for kinetochore detachment from microtubules during replication of centromeric DNA. Phosphorylates histone H3 to form H3S10ph during mitosis and meiosis. Phosphorylates CNN1, which contributes to the enrichment of CNN1 on anaphase kinetochores. Phosphorylates RGD1. This Saccharomyces cerevisiae (strain ATCC 204508 / S288c) (Baker's yeast) protein is Aurora kinase (IPL1).